The following is a 337-amino-acid chain: Aspartate carbamoyltransferase catalytic subunit (337 aa).

Positions 54 and 55 each coordinate carbamoyl phosphate. Lysine 82 lines the L-aspartate pocket. The carbamoyl phosphate site is built by arginine 104, histidine 134, and glutamine 137. Arginine 177 and arginine 232 together coordinate L-aspartate. Carbamoyl phosphate-binding residues include glycine 277 and proline 278.

This sequence belongs to the aspartate/ornithine carbamoyltransferase superfamily. ATCase family. Heterododecamer (2C3:3R2) of six catalytic PyrB chains organized as two trimers (C3), and six regulatory PyrI chains organized as three dimers (R2).

It carries out the reaction carbamoyl phosphate + L-aspartate = N-carbamoyl-L-aspartate + phosphate + H(+). It participates in pyrimidine metabolism; UMP biosynthesis via de novo pathway; (S)-dihydroorotate from bicarbonate: step 2/3. In terms of biological role, catalyzes the condensation of carbamoyl phosphate and aspartate to form carbamoyl aspartate and inorganic phosphate, the committed step in the de novo pyrimidine nucleotide biosynthesis pathway. The polypeptide is Aspartate carbamoyltransferase catalytic subunit (Arthrobacter sp. (strain FB24)).